Here is a 626-residue protein sequence, read N- to C-terminus: Putative ankyrin repeat protein R837 (626 aa).

ANK repeat units lie at residues 42–72, 80–109, 110–139, 140–169, 171–199, 201–230, 242–269, 270–298, 299–328, 330–358, 393–416, 417–446, 452–479, 480–509, 510–539, 540–569, 570–599, and 601–626; these read EYFN…GLIR, TLNT…NHRY, SEDK…NIKS, RNNY…DITV, DYEV…DIKK, NKKR…DVYR, KNYK…YQLS, DTNN…LHEL, NLNQ…DINT, GNSC…RLTS, TIMS…KSSL, DYES…ITKQ, INNS…GINI, CINY…NINE, FGDL…NIYI, IKDN…DYHK, KNEL…KTKT, and FFDP…NEIK.

This is Putative ankyrin repeat protein R837 from Acanthamoeba polyphaga (Amoeba).